Consider the following 206-residue polypeptide: Thiamine-phosphate synthase (206 aa).

Residues 35–39 and N67 each bind 4-amino-2-methyl-5-(diphosphooxymethyl)pyrimidine; that span reads QLRDK. Residues D68 and D87 each contribute to the Mg(2+) site. S106 serves as a coordination point for 4-amino-2-methyl-5-(diphosphooxymethyl)pyrimidine. 2-[(2R,5Z)-2-carboxy-4-methylthiazol-5(2H)-ylidene]ethyl phosphate is bound at residue 132–134; the sequence is TGT. Position 135 (K135) interacts with 4-amino-2-methyl-5-(diphosphooxymethyl)pyrimidine. Residues G163 and 183–184 each bind 2-[(2R,5Z)-2-carboxy-4-methylthiazol-5(2H)-ylidene]ethyl phosphate; that span reads IS.

Belongs to the thiamine-phosphate synthase family. Requires Mg(2+) as cofactor.

It carries out the reaction 2-[(2R,5Z)-2-carboxy-4-methylthiazol-5(2H)-ylidene]ethyl phosphate + 4-amino-2-methyl-5-(diphosphooxymethyl)pyrimidine + 2 H(+) = thiamine phosphate + CO2 + diphosphate. The catalysed reaction is 2-(2-carboxy-4-methylthiazol-5-yl)ethyl phosphate + 4-amino-2-methyl-5-(diphosphooxymethyl)pyrimidine + 2 H(+) = thiamine phosphate + CO2 + diphosphate. It catalyses the reaction 4-methyl-5-(2-phosphooxyethyl)-thiazole + 4-amino-2-methyl-5-(diphosphooxymethyl)pyrimidine + H(+) = thiamine phosphate + diphosphate. It functions in the pathway cofactor biosynthesis; thiamine diphosphate biosynthesis; thiamine phosphate from 4-amino-2-methyl-5-diphosphomethylpyrimidine and 4-methyl-5-(2-phosphoethyl)-thiazole: step 1/1. In terms of biological role, condenses 4-methyl-5-(beta-hydroxyethyl)thiazole monophosphate (THZ-P) and 2-methyl-4-amino-5-hydroxymethyl pyrimidine pyrophosphate (HMP-PP) to form thiamine monophosphate (TMP). This Methanospirillum hungatei JF-1 (strain ATCC 27890 / DSM 864 / NBRC 100397 / JF-1) protein is Thiamine-phosphate synthase.